We begin with the raw amino-acid sequence, 347 residues long: Spermatogenesis associated 6-like protein (347 aa).

Positions 115–199 are disordered; it reads SKSHGQRVQA…ENNLEHCSKK (85 aa). The span at 116-125 shows a compositional bias: polar residues; it reads KSHGQRVQAT. Residues 153–166 are compositionally biased toward basic residues; it reads LHLHRPTQRNHGKS. Positions 170 to 183 are enriched in basic and acidic residues; the sequence is PGERKPPFVVRHVD. 2 positions are modified to phosphoserine: Ser-218 and Ser-221. Residues 234-285 are disordered; it reads ERIVLKSQPPPPVDSSESRKPSLSHQGDASLHTETSVTTSQLSRPPSPLNQP. Over residues 254-277 the composition is skewed to polar residues; the sequence is PSLSHQGDASLHTETSVTTSQLSR.

Belongs to the SPATA6 family.

The protein is Spermatogenesis associated 6-like protein (Spata6l) of Mus musculus (Mouse).